A 241-amino-acid polypeptide reads, in one-letter code: GDSL esterase/lipase At5g45920 (241 aa).

Residue Ser12 is the Nucleophile of the active site. Active-site residues include Asp189 and His192.

Belongs to the 'GDSL' lipolytic enzyme family.

This Arabidopsis thaliana (Mouse-ear cress) protein is GDSL esterase/lipase At5g45920.